The sequence spans 211 residues: Large ribosomal subunit protein uL3 (211 aa).

A disordered region spans residues 126 to 147 (HGQSRGPMAHGSRYHRRPGSMG).

The protein belongs to the universal ribosomal protein uL3 family. In terms of assembly, part of the 50S ribosomal subunit. Forms a cluster with proteins L14 and L19.

In terms of biological role, one of the primary rRNA binding proteins, it binds directly near the 3'-end of the 23S rRNA, where it nucleates assembly of the 50S subunit. This Geobacillus thermodenitrificans (strain NG80-2) protein is Large ribosomal subunit protein uL3.